We begin with the raw amino-acid sequence, 491 residues long: Trigger factor (491 aa).

The PPIase FKBP-type domain maps to 173-260 (GDVAVVSFSG…LDELKGRELP (88 aa)). Positions 435–491 (MVDPASEDKPAKASKAKSSKAKAEKEPAAEGQAKAKPAAKTSKSKTKAAEKLITPID) are disordered. The segment covering 463 to 475 (AEGQAKAKPAAKT) has biased composition (low complexity).

Belongs to the FKBP-type PPIase family. Tig subfamily.

It is found in the cytoplasm. It catalyses the reaction [protein]-peptidylproline (omega=180) = [protein]-peptidylproline (omega=0). Its function is as follows. Involved in protein export. Acts as a chaperone by maintaining the newly synthesized protein in an open conformation. Functions as a peptidyl-prolyl cis-trans isomerase. In Synechococcus sp. (strain RCC307), this protein is Trigger factor.